Here is an 87-residue protein sequence, read N- to C-terminus: MDKARKLELIKKFGRSEGDTGSPEVQVALLTERIQSLTEHLKVHKKDHHSRRGLLMMVGQRRGLLNYLSDQDIERYRTLIKELGLRR.

The protein belongs to the universal ribosomal protein uS15 family. In terms of assembly, part of the 30S ribosomal subunit. Forms a bridge to the 50S subunit in the 70S ribosome, contacting the 23S rRNA.

One of the primary rRNA binding proteins, it binds directly to 16S rRNA where it helps nucleate assembly of the platform of the 30S subunit by binding and bridging several RNA helices of the 16S rRNA. In terms of biological role, forms an intersubunit bridge (bridge B4) with the 23S rRNA of the 50S subunit in the ribosome. This is Small ribosomal subunit protein uS15 from Clostridium beijerinckii (strain ATCC 51743 / NCIMB 8052) (Clostridium acetobutylicum).